The primary structure comprises 682 residues: tRNA(Met) cytidine acetyltransferase TmcA (682 aa).

ATP-binding positions include Q176, 198-207, and R320; that span reads GRGKSTLAGM. One can recognise an N-acetyltransferase domain in the interval 357-534; the sequence is QQQWIQQPEL…SGCYTAMAIF (178 aa). Acetyl-CoA is bound by residues 462–464 and E502; that span reads VAV.

This sequence belongs to the RNA cytidine acetyltransferase family. TmcA subfamily.

The protein resides in the cytoplasm. The catalysed reaction is cytidine(34) in elongator tRNA(Met) + acetyl-CoA + ATP + H2O = N(4)-acetylcytidine(34) in elongator tRNA(Met) + ADP + phosphate + CoA + H(+). Catalyzes the formation of N(4)-acetylcytidine (ac(4)C) at the wobble position of tRNA(Met), by using acetyl-CoA as an acetyl donor and ATP (or GTP). The chain is tRNA(Met) cytidine acetyltransferase TmcA from Photorhabdus asymbiotica subsp. asymbiotica (strain ATCC 43949 / 3105-77) (Xenorhabdus luminescens (strain 2)).